The sequence spans 1058 residues: Leucine-rich repeat and coiled-coil domain-containing protein PF3D7_0703800 (1058 aa).

Residues 1–10 show a composition bias toward basic residues; that stretch reads MAIKKKKKET. Residues 1–34 form a disordered region; the sequence is MAIKKKKKETKSKDNNNDNLRNEKKSTNLENGKY. Over residues 11-34 the composition is skewed to basic and acidic residues; it reads KSKDNNNDNLRNEKKSTNLENGKY. Residues 515–544 are a coiled coil; it reads LKQLYTFIKNYENNNDKLNIKSQIINKDKN. Residues 641 to 661 show a composition bias toward basic and acidic residues; sequence ENKDHLQHEEHTHEEEPKDAN. 2 disordered regions span residues 641-665 and 706-728; these read ENKD…GDMV and NIED…ENMK. Positions 872 to 905 form a coiled coil; the sequence is NYDHTQENILKNKNNMEDQNNLLEQNIMTDQLQN.

In Plasmodium falciparum (isolate 3D7), this protein is Leucine-rich repeat and coiled-coil domain-containing protein PF3D7_0703800.